We begin with the raw amino-acid sequence, 197 residues long: Recombination protein RecR (197 aa).

The segment at 56–71 (CHVCGNYCESDTCNIC) adopts a C4-type zinc-finger fold. The 96-residue stretch at 79-174 (RIICVVEESK…KITKLASGIP (96 aa)) folds into the Toprim domain.

It belongs to the RecR family.

Its function is as follows. May play a role in DNA repair. It seems to be involved in an RecBC-independent recombinational process of DNA repair. It may act with RecF and RecO. The sequence is that of Recombination protein RecR from Fusobacterium nucleatum subsp. nucleatum (strain ATCC 25586 / DSM 15643 / BCRC 10681 / CIP 101130 / JCM 8532 / KCTC 2640 / LMG 13131 / VPI 4355).